Here is an 84-residue protein sequence, read N- to C-terminus: MLKFVVVICLVIMAITFAEKCGDQECGEGTCCLDYSQQHCSRLGKLYDMCSDPNDKTDSGSHIFFCQCETGLRCDKTSWSCQKG.

Positions 1 to 18 are cleaved as a signal peptide; the sequence is MLKFVVVICLVIMAITFA. 5 disulfide bridges follow: Cys21–Cys32, Cys26–Cys40, Cys31–Cys66, Cys50–Cys74, and Cys68–Cys81.

It belongs to the MIT-like AcTx family. In terms of tissue distribution, expressed by the venom gland.

The protein localises to the secreted. The chain is U1-hexatoxin-Iw1a from Illawarra wisharti (Illawarra funnel-web spider).